The sequence spans 322 residues: Pantothenate kinase (322 aa).

100-107 (GSVAVGKS) lines the ATP pocket.

The protein belongs to the prokaryotic pantothenate kinase family.

Its subcellular location is the cytoplasm. It carries out the reaction (R)-pantothenate + ATP = (R)-4'-phosphopantothenate + ADP + H(+). The protein operates within cofactor biosynthesis; coenzyme A biosynthesis; CoA from (R)-pantothenate: step 1/5. This is Pantothenate kinase from Brucella canis (strain ATCC 23365 / NCTC 10854 / RM-666).